A 453-amino-acid chain; its full sequence is Tubulin alpha-1/2/3 chain (453 aa).

Residue Q11 participates in GTP binding. Position 40 is an N6-acetyllysine (K40). Positions 71, 140, 144, 145, 179, 206, and 228 each coordinate GTP. E71 contributes to the Mg(2+) binding site. The active site involves E254. The tract at residues E429–Q453 is disordered. Residues D431–Q453 show a composition bias toward acidic residues.

The protein belongs to the tubulin family. In terms of assembly, dimer of alpha and beta chains. A typical microtubule is a hollow water-filled tube with an outer diameter of 25 nm and an inner diameter of 15 nM. Alpha-beta heterodimers associate head-to-tail to form protofilaments running lengthwise along the microtubule wall with the beta-tubulin subunit facing the microtubule plus end conferring a structural polarity. Microtubules usually have 13 protofilaments but different protofilament numbers can be found in some organisms and specialized cells. It depends on Mg(2+) as a cofactor. Post-translationally, acetylation of alpha chains at Lys-40 stabilizes microtubules and affects affinity and processivity of microtubule motors. This modification has a role in multiple cellular functions, ranging from cell motility, cell cycle progression or cell differentiation to intracellular trafficking and signaling.

Its subcellular location is the cytoplasm. The protein resides in the cytoskeleton. The enzyme catalyses GTP + H2O = GDP + phosphate + H(+). Functionally, tubulin is the major constituent of microtubules, a cylinder consisting of laterally associated linear protofilaments composed of alpha- and beta-tubulin heterodimers. Microtubules grow by the addition of GTP-tubulin dimers to the microtubule end, where a stabilizing cap forms. Below the cap, tubulin dimers are in GDP-bound state, owing to GTPase activity of alpha-tubulin. The protein is Tubulin alpha-1/2/3 chain (TBA1) of Naegleria gruberi (Amoeba).